The primary structure comprises 131 residues: Large ribosomal subunit protein eL14 (131 aa).

The protein belongs to the eukaryotic ribosomal protein eL14 family. As to quaternary structure, component of the large ribosomal subunit. Mature ribosomes consist of a small (40S) and a large (60S) subunit. The 40S subunit contains about 32 different proteins and 1 molecule of RNA (18S). The 60S subunit contains 45 different proteins and 3 molecules of RNA (25S, 5.8S and 5S).

The protein localises to the cytoplasm. Functionally, component of the ribosome, a large ribonucleoprotein complex responsible for the synthesis of proteins in the cell. The small ribosomal subunit (SSU) binds messenger RNAs (mRNAs) and translates the encoded message by selecting cognate aminoacyl-transfer RNA (tRNA) molecules. The large subunit (LSU) contains the ribosomal catalytic site termed the peptidyl transferase center (PTC), which catalyzes the formation of peptide bonds, thereby polymerizing the amino acids delivered by tRNAs into a polypeptide chain. The nascent polypeptides leave the ribosome through a tunnel in the LSU and interact with protein factors that function in enzymatic processing, targeting, and the membrane insertion of nascent chains at the exit of the ribosomal tunnel. This chain is Large ribosomal subunit protein eL14, found in Candida albicans (strain SC5314 / ATCC MYA-2876) (Yeast).